Here is a 386-residue protein sequence, read N- to C-terminus: Lipid-A-disaccharide synthase (386 aa).

Belongs to the LpxB family.

It carries out the reaction a lipid X + a UDP-2-N,3-O-bis[(3R)-3-hydroxyacyl]-alpha-D-glucosamine = a lipid A disaccharide + UDP + H(+). The protein operates within bacterial outer membrane biogenesis; LPS lipid A biosynthesis. Its function is as follows. Condensation of UDP-2,3-diacylglucosamine and 2,3-diacylglucosamine-1-phosphate to form lipid A disaccharide, a precursor of lipid A, a phosphorylated glycolipid that anchors the lipopolysaccharide to the outer membrane of the cell. The polypeptide is Lipid-A-disaccharide synthase (Chromobacterium violaceum (strain ATCC 12472 / DSM 30191 / JCM 1249 / CCUG 213 / NBRC 12614 / NCIMB 9131 / NCTC 9757 / MK)).